The sequence spans 503 residues: Probable cytosol aminopeptidase (503 aa).

Mn(2+) is bound by residues Lys-270 and Asp-275. Lys-282 is an active-site residue. The Mn(2+) site is built by Asp-293, Asp-352, and Glu-354. The active site involves Arg-356.

It belongs to the peptidase M17 family. Mn(2+) serves as cofactor.

It localises to the cytoplasm. The catalysed reaction is Release of an N-terminal amino acid, Xaa-|-Yaa-, in which Xaa is preferably Leu, but may be other amino acids including Pro although not Arg or Lys, and Yaa may be Pro. Amino acid amides and methyl esters are also readily hydrolyzed, but rates on arylamides are exceedingly low.. It catalyses the reaction Release of an N-terminal amino acid, preferentially leucine, but not glutamic or aspartic acids.. In terms of biological role, presumably involved in the processing and regular turnover of intracellular proteins. Catalyzes the removal of unsubstituted N-terminal amino acids from various peptides. The chain is Probable cytosol aminopeptidase from Yersinia pseudotuberculosis serotype O:1b (strain IP 31758).